Consider the following 316-residue polypeptide: CD276 antigen (316 aa).

Residues 1 to 28 form the signal peptide; sequence MLRGWGGPSVGVCVRTALGVLCLCLTGA. In terms of domain architecture, Ig-like V-type spans 29–139; that stretch reads VEVQVSEDPV…DSAAVSLQVA (111 aa). Topologically, residues 29 to 248 are extracellular; it reads VEVQVSEDPV…GQPLTFPPEA (220 aa). N-linked (GlcNAc...) asparagine glycosylation is found at N104, N189, and N215. The 94-residue stretch at 145-238 folds into the Ig-like C2-type domain; it reads PSMTLEPNKD…QDAHGSVTIT (94 aa). A disulfide bridge connects residues C165 and C220. Residues 249 to 269 traverse the membrane as a helical segment; sequence LWVTVGLSVCLVVLLVALAFV. Over 270 to 316 the chain is Cytoplasmic; it reads CWRKIKQSCEEENAGAEDQDGDGEGSKTALRPLKPSENKEDDGQEIA. A compositionally biased stretch (acidic residues) spans 280–292; it reads EENAGAEDQDGDG. A disordered region spans residues 280–316; that stretch reads EENAGAEDQDGDGEGSKTALRPLKPSENKEDDGQEIA.

It belongs to the immunoglobulin superfamily. BTN/MOG family. As to quaternary structure, interacts with TREML2 and this interaction enhances T-cell activation. Ubiquitous.

Its subcellular location is the membrane. In terms of biological role, modulates T-cell-mediated immune responses and the development of acute and chronic transplant rejection. Plays a positive regulatory role in bone formation and has a dual role in the bone-immune interface. Induces antitumor immunity as it activates both acquired and innate immunity leading to natural killer cell and CD8 T-cell dependent killing of tumor cells. This Mus musculus (Mouse) protein is CD276 antigen (Cd276).